A 398-amino-acid polypeptide reads, in one-letter code: ATP-dependent RNA helicase eIF4A (398 aa).

The Q motif signature appears at 25–53; sequence DSFDSMELKPELLRGIYAYGFERPSAIQQ. Residues 56–226 enclose the Helicase ATP-binding domain; the sequence is ILPIIKGNDV…TKFMRDPVRI (171 aa). 69 to 76 contributes to the ATP binding site; sequence AQSGTGKT. The short motif at 174-177 is the DEAD box element; the sequence is DEAD. The 162-residue stretch at 237 to 398 folds into the Helicase C-terminal domain; the sequence is GIKQFYIAVE…EMPMNVADLI (162 aa).

It belongs to the DEAD box helicase family. eIF4A subfamily. As to quaternary structure, component of the eIF4F complex, which composition varies with external and internal environmental conditions. It is composed of at least eIF4A, eIF4E and eIF4G.

The protein localises to the cytoplasm. It carries out the reaction ATP + H2O = ADP + phosphate + H(+). Its function is as follows. ATP-dependent RNA helicase which is a subunit of the eIF4F complex involved in cap recognition and is required for mRNA binding to ribosome. In the current model of translation initiation, eIF4A unwinds RNA secondary structures in the 5'-UTR of mRNAs which is necessary to allow efficient binding of the small ribosomal subunit, and subsequent scanning for the initiator codon. This is ATP-dependent RNA helicase eIF4A (tif1) from Neosartorya fischeri (strain ATCC 1020 / DSM 3700 / CBS 544.65 / FGSC A1164 / JCM 1740 / NRRL 181 / WB 181) (Aspergillus fischerianus).